We begin with the raw amino-acid sequence, 438 residues long: Thymidine phosphorylase (438 aa).

This sequence belongs to the thymidine/pyrimidine-nucleoside phosphorylase family. Homodimer.

It carries out the reaction thymidine + phosphate = 2-deoxy-alpha-D-ribose 1-phosphate + thymine. It participates in pyrimidine metabolism; dTMP biosynthesis via salvage pathway; dTMP from thymine: step 1/2. Its function is as follows. The enzymes which catalyze the reversible phosphorolysis of pyrimidine nucleosides are involved in the degradation of these compounds and in their utilization as carbon and energy sources, or in the rescue of pyrimidine bases for nucleotide synthesis. The polypeptide is Thymidine phosphorylase (Burkholderia orbicola (strain AU 1054)).